We begin with the raw amino-acid sequence, 37 residues long: Photosystem I reaction center subunit IX (37 aa).

A helical transmembrane segment spans residues 4 to 24 (FLSSAPVLLTAMMVFTAGLLI).

Belongs to the PsaJ family.

It is found in the cellular thylakoid membrane. Functionally, may help in the organization of the PsaE and PsaF subunits. The protein is Photosystem I reaction center subunit IX of Picosynechococcus sp. (strain ATCC 27264 / PCC 7002 / PR-6) (Agmenellum quadruplicatum).